A 75-amino-acid chain; its full sequence is Translation initiation factor IF-1 1 (75 aa).

Positions 1–74 (MARSDMIEVD…TRGRIVYRYR (74 aa)) constitute an S1-like domain.

It belongs to the IF-1 family. As to quaternary structure, component of the 30S ribosomal translation pre-initiation complex which assembles on the 30S ribosome in the order IF-2 and IF-3, IF-1 and N-formylmethionyl-tRNA(fMet); mRNA recruitment can occur at any time during PIC assembly.

The protein localises to the cytoplasm. Its function is as follows. One of the essential components for the initiation of protein synthesis. Stabilizes the binding of IF-2 and IF-3 on the 30S subunit to which N-formylmethionyl-tRNA(fMet) subsequently binds. Helps modulate mRNA selection, yielding the 30S pre-initiation complex (PIC). Upon addition of the 50S ribosomal subunit IF-1, IF-2 and IF-3 are released leaving the mature 70S translation initiation complex. This chain is Translation initiation factor IF-1 1, found in Symbiobacterium thermophilum (strain DSM 24528 / JCM 14929 / IAM 14863 / T).